A 502-amino-acid polypeptide reads, in one-letter code: Transmembrane prolyl 4-hydroxylase (502 aa).

The segment at Met-1–His-29 is disordered. Residues Met-1–Tyr-60 are Cytoplasmic-facing. The chain crosses the membrane as a helical; Signal-anchor for type II membrane protein span at residues Phe-61–Phe-81. Residues Val-82–Leu-502 lie on the Lumenal side of the membrane. The disordered stretch occupies residues Glu-89–Leu-111. 2 EF-hand domains span residues Thr-185 to Trp-220 and Pro-224 to Lys-259. Residues Asp-198, Asn-200, Asp-202, His-204, Glu-209, Asp-237, Asp-239, Asp-241, and Glu-248 each contribute to the Ca(2+) site. A Fe2OG dioxygenase domain is found at Leu-310 to Val-460. Positions 328 and 330 each coordinate Fe cation. Residues Asn-348 and Asn-368 are each glycosylated (N-linked (GlcNAc...) asparagine). Glu-374 lines the Fe cation pocket. N-linked (GlcNAc...) asparagine glycosylation occurs at Asn-382. Lys-451 lines the 2-oxoglutarate pocket.

Homodimer. Fe(2+) is required as a cofactor. The cofactor is L-ascorbate. Post-translationally, glycosylated. Widely expressed with highest levels in adult pancreas, heart, skeletal muscle, brain, placenta, kidney and adrenal gland. Expressed at lower levels in epiphyseal cartilage and in fibroblasts.

It is found in the endoplasmic reticulum membrane. It catalyses the reaction L-prolyl-[hypoxia-inducible factor alpha subunit] + 2-oxoglutarate + O2 = trans-4-hydroxy-L-prolyl-[hypoxia-inducible factor alpha subunit] + succinate + CO2. Catalyzes the post-translational formation of 4-hydroxyproline in hypoxia-inducible factor (HIF) alpha proteins. Hydroxylates HIF1A at 'Pro-402' and 'Pro-564'. May function as a cellular oxygen sensor and, under normoxic conditions, may target HIF through the hydroxylation for proteasomal degradation via the von Hippel-Lindau ubiquitination complex. The sequence is that of Transmembrane prolyl 4-hydroxylase (P4HTM) from Homo sapiens (Human).